The sequence spans 218 residues: Tegument protein UL51 homolog (218 aa).

The S-palmitoyl cysteine; by host moiety is linked to residue C11. Residues A199–T218 are disordered.

The protein belongs to the herpesviridae UL51 family. Homodimer. Interacts with BBRF2; the BBRF2-BSRF1 complexes oligomerize which might play a role in tethering the viral nucleocapsids to the host Golgi membrane during secondary envelopment. Interacts with BGLF3.5. Interacts with BALF1. Interacts with glycoprotein gB. Interacts with glycoprotein heterodimer gH/gL. Phosphorylated. In terms of processing, palmitoylation is necessary for Golgi localization.

The protein resides in the host cytoplasm. The protein localises to the virion. It is found in the host Golgi apparatus. In terms of biological role, plays several roles during the time course of infection, including egress of virus particles from the perinuclear space and secondary envelopment of cytoplasmic capsids that bud into specific trans-Golgi network (TGN)-derived membranes. This is Tegument protein UL51 homolog from Homo sapiens (Human).